The primary structure comprises 245 residues: 1-(5-phosphoribosyl)-5-[(5-phosphoribosylamino)methylideneamino] imidazole-4-carboxamide isomerase (245 aa).

D8 acts as the Proton acceptor in catalysis. Catalysis depends on D131, which acts as the Proton donor.

The protein belongs to the HisA/HisF family.

It localises to the cytoplasm. The catalysed reaction is 1-(5-phospho-beta-D-ribosyl)-5-[(5-phospho-beta-D-ribosylamino)methylideneamino]imidazole-4-carboxamide = 5-[(5-phospho-1-deoxy-D-ribulos-1-ylimino)methylamino]-1-(5-phospho-beta-D-ribosyl)imidazole-4-carboxamide. The protein operates within amino-acid biosynthesis; L-histidine biosynthesis; L-histidine from 5-phospho-alpha-D-ribose 1-diphosphate: step 4/9. The sequence is that of 1-(5-phosphoribosyl)-5-[(5-phosphoribosylamino)methylideneamino] imidazole-4-carboxamide isomerase from Neisseria meningitidis serogroup C (strain 053442).